The following is a 180-amino-acid chain: KxDL motif-containing protein 1 (180 aa).

Composition is skewed to polar residues over residues threonine 130–isoleucine 144 and glutamine 158–isoleucine 170. The tract at residues threonine 130–aspartate 180 is disordered.

This sequence belongs to the KXD1 family. As to quaternary structure, associates with the BLOC-1 complex.

It is found in the lysosome membrane. Functionally, as part of a BORC-like complex may play a role in lysosomes movement and localization at the cell periphery. Associated with the cytosolic face of lysosomes, this complex may couple lysosomes to microtubule plus-end-directed kinesin motor. May also be involved in the biogenesis of lysosome-related organelles such as melanosomes. The sequence is that of KxDL motif-containing protein 1 (kxd1) from Xenopus laevis (African clawed frog).